Here is a 443-residue protein sequence, read N- to C-terminus: Probable glycine dehydrogenase (decarboxylating) subunit 1 (443 aa).

This sequence belongs to the GcvP family. N-terminal subunit subfamily. As to quaternary structure, the glycine cleavage system is composed of four proteins: P, T, L and H. In this organism, the P 'protein' is a heterodimer of two subunits.

It carries out the reaction N(6)-[(R)-lipoyl]-L-lysyl-[glycine-cleavage complex H protein] + glycine + H(+) = N(6)-[(R)-S(8)-aminomethyldihydrolipoyl]-L-lysyl-[glycine-cleavage complex H protein] + CO2. In terms of biological role, the glycine cleavage system catalyzes the degradation of glycine. The P protein binds the alpha-amino group of glycine through its pyridoxal phosphate cofactor; CO(2) is released and the remaining methylamine moiety is then transferred to the lipoamide cofactor of the H protein. The chain is Probable glycine dehydrogenase (decarboxylating) subunit 1 from Nitratidesulfovibrio vulgaris (strain DSM 19637 / Miyazaki F) (Desulfovibrio vulgaris).